A 425-amino-acid chain; its full sequence is Caveolae-associated protein 2 (425 aa).

The tract at residues 1–42 is disordered; it reads MGEDAAQAEKFQHPGSDMRQEKPSSPSPMPSSTPSPSLNLGN. Residue Gly2 is modified to N-acetylglycine. Positions 2 to 168 are interaction with CAVIN1; it reads GEDAAQAEKF…IFQEENEIPA (167 aa). A compositionally biased stretch (basic and acidic residues) spans 10-22; the sequence is KFQHPGSDMRQEK. 4 positions are modified to phosphoserine: Ser27, Ser35, Ser37, and Ser51. Coiled-coil stretches lie at residues 61–82 and 125–154; these read LLDK…MEQR and TRAV…RRNH. The tract at residues 62–100 is leucine-zipper; the sequence is LDKLVNMLDAVQENQHKMEQRQISLEGSVKGIQNDLTKL. 2 positions are modified to phosphothreonine: Thr196 and Thr199. Disordered regions lie at residues 199 to 234 and 271 to 425; these read TVDL…IKRS and IKKS…HQTS. Residues Ser203, Ser204, and Ser218 each carry the phosphoserine modification. Over residues 203–219 the composition is skewed to acidic residues; sequence SSDDDLPHDEEALEDSA. The stretch at 210-268 forms a coiled coil; sequence HDEEALEDSAEEKVEESRAEKIKRSSLKKVDSLKKAFSRQNIEKKMNKLGTKIVSVERR. Residues 220–234 are compositionally biased toward basic and acidic residues; that stretch reads EEKVEESRAEKIKRS. Positions 274–287 are enriched in polar residues; sequence SLTSNHQKISSGKS. Ser283, Ser284, Ser287, Ser288, and Ser293 each carry phosphoserine. Basic and acidic residues predominate over residues 303–317; it reads REGESHAENETKSED. Phosphoserine occurs at positions 332, 341, 366, and 370. Thr375 bears the Phosphothreonine mark. Residues 376-385 show a composition bias toward acidic residues; the sequence is IVEDEEEESV. Tyr395 carries the post-translational modification Phosphotyrosine. Ser403 is modified (phosphoserine).

The protein belongs to the CAVIN family. In terms of assembly, component of the CAVIN complex composed of CAVIN1, CAVIN2, CAVIN3 and CAVIN4. Binds to PRKCA in the presence of phosphatidylserine. Interacts with CAVIN4; this augments the transactivation of NPPA by CAVIN4. Interacts with CAVIN1. Interacts with CAV3. Post-translationally, phosphorylated on Ser residues. As to expression, highly expressed in heart and lung, and expressed at lower levels in brain, kidney, liver, pancreas, placenta, and skeletal muscle.

The protein localises to the cytoplasm. It is found in the cytosol. Its subcellular location is the membrane. The protein resides in the caveola. Its function is as follows. Plays an important role in caveolar biogenesis and morphology. Regulates caveolae morphology by inducing membrane curvature within caveolae. Plays a role in caveola formation in a tissue-specific manner. Required for the formation of caveolae in the lung and fat endothelia but not in the heart endothelia. Negatively regulates the size or stability of CAVIN complexes in the lung endothelial cells. May play a role in targeting PRKCA to caveolae. The chain is Caveolae-associated protein 2 from Homo sapiens (Human).